Reading from the N-terminus, the 504-residue chain is Sodium-coupled neutral amino acid symporter 2 (504 aa).

Residues 1–23 form a disordered region; it reads MKKTEMGRFNISPDEDSSSYSSN. The Cytoplasmic portion of the chain corresponds to 1–76; the sequence is MKKTEMGRFN…HPGTTSFGMS (76 aa). The interval 1 to 96 is regulates protein turnover upon amino acid deprivation; that stretch reads MKKTEMGRFN…SGILGLSYAM (96 aa). Phosphoserine occurs at positions 12, 21, 22, and 55. A helical membrane pass occupies residues 77-96; sequence VFNLSNAIVGSGILGLSYAM. Residue asparagine 82 participates in Na(+) binding. The Extracellular segment spans residues 97 to 102; it reads ANTGIA. The helical transmembrane segment at 103-123 threads the bilayer; sequence LFIILLTFVSIFSLYSVHLLL. Topologically, residues 124-158 are cytoplasmic; that stretch reads KTANEGGSLLYEQLGHKAYGLAGKLAASGSITMQN. A helical transmembrane segment spans residues 159–177; the sequence is IGAMSSYLFIVKYELPLVI. Residues 178–188 lie on the Extracellular side of the membrane; that stretch reads KALMNIEDTNG. The chain crosses the membrane as a helical span at residues 189–209; sequence LWYLNGDYLVLLVSLVLILPL. The Cytoplasmic segment spans residues 210–217; that stretch reads SLLRNLGY. A helical membrane pass occupies residues 218 to 238; that stretch reads LGYTSGLSLLCMIFFLIVVIC. The Extracellular portion of the chain corresponds to 239-289; the sequence is KKFQIPCPVEAALVANETVNGTFTQAALALAFNSTADDACRPRYFIFNSQT. Cysteines 245 and 278 form a disulfide. Asparagine 254 and asparagine 258 each carry an N-linked (GlcNAc...) asparagine glycan. A helical membrane pass occupies residues 290 to 310; the sequence is VYAVPILTFSFVCHPAVLPIY. Over 311–326 the chain is Cytoplasmic; the sequence is EELKSRSRRRMMNVSK. A helical transmembrane segment spans residues 327–347; the sequence is ISFFAMFLMYLLAALFGYLTF. The Extracellular portion of the chain corresponds to 348 to 368; the sequence is YGHVESELLHTYSEIVGTDIL. The chain crosses the membrane as a helical span at residues 369 to 389; it reads LLVVRLAVLVAVTLTVPVVIF. Threonine 383 lines the Na(+) pocket. The Cytoplasmic portion of the chain corresponds to 390–410; sequence PIRSSVTHLLCPTKEFSWLRH. Residues 411-431 traverse the membrane as a helical segment; it reads SIITVTILSFTNLLVIFVPTI. Over 432-433 the chain is Extracellular; the sequence is RD. The chain crosses the membrane as a helical span at residues 434–454; that stretch reads IFGFIGASAAAMLIFILPSAF. Over 455–469 the chain is Cytoplasmic; that stretch reads YIKLVKKEPMRSVQK. Residues 470 to 492 traverse the membrane as a helical segment; the sequence is IGALCFLLSGIVVMIGSMGLIVL. The Extracellular portion of the chain corresponds to 493 to 504; the sequence is DWVHDASAAGGH.

Belongs to the amino acid/polyamine transporter 2 family. Polyubiquitination by NEDD4L regulates the degradation and the activity of SLC38A2. In terms of tissue distribution, expressed in cerebral and cerebellar astrocytes and neurons.

Its subcellular location is the cell membrane. The catalysed reaction is L-alanine(in) + Na(+)(in) = L-alanine(out) + Na(+)(out). It catalyses the reaction glycine(in) + Na(+)(in) = glycine(out) + Na(+)(out). The enzyme catalyses L-serine(in) + Na(+)(in) = L-serine(out) + Na(+)(out). It carries out the reaction L-proline(in) + Na(+)(in) = L-proline(out) + Na(+)(out). The catalysed reaction is L-methionine(in) + Na(+)(in) = L-methionine(out) + Na(+)(out). It catalyses the reaction L-histidine(in) + Na(+)(in) = L-histidine(out) + Na(+)(out). The enzyme catalyses L-asparagine(in) + Na(+)(in) = L-asparagine(out) + Na(+)(out). It carries out the reaction L-glutamine(in) + Na(+)(in) = L-glutamine(out) + Na(+)(out). The catalysed reaction is L-threonine(in) + Na(+)(in) = L-threonine(out) + Na(+)(out). It catalyses the reaction L-leucine(in) + Na(+)(in) = L-leucine(out) + Na(+)(out). The enzyme catalyses L-phenylalanine(in) + Na(+)(in) = L-phenylalanine(out) + Na(+)(out). Inhibited by N-methyl-D-glucamine. Inhibited by choline. Allosteric regulation of sodium ions binding by pH. In terms of biological role, symporter that cotransports neutral amino acids and sodium ions from the extracellular to the intracellular side of the cell membrane. The transport is pH-sensitive, Li(+)-intolerant, electrogenic, driven by the Na(+) electrochemical gradient and cotransports of neutral amino acids and sodium ions with a stoichiometry of 1:1. May function in the transport of amino acids at the blood-brain barrier. May function in the transport of amino acids in the supply of maternal nutrients to the fetus through the placenta. Maintains a key metabolic glutamine/glutamate balance underpinning retrograde signaling by dendritic release of the neurotransmitter glutamate. Transports L-proline in differentiating osteoblasts for the efficient synthesis of proline-enriched proteins and provides proline essential for osteoblast differentiation and bone formation during bone development. This chain is Sodium-coupled neutral amino acid symporter 2, found in Mus musculus (Mouse).